A 327-amino-acid chain; its full sequence is DNA repair protein XRCC4 (327 aa).

An interaction with IFFO1 region spans residues 1–211 (MERKVSRISL…QLEKNLKPER (211 aa)). The residue at position 53 (S53) is a Phosphoserine. Coiled-coil stretches lie at residues 133–153 (IAEK…LLRD) and 183–213 (LNEK…ERET). 2 interaction with LIG4 regions span residues 179-210 (FILV…LKPE) and 179-211 (FILV…KPER). S192 is subject to Phosphoserine. Residue K208 forms a Glycyl lysine isopeptide (Lys-Gly) (interchain with G-Cter in SUMO) linkage. Y226 carries the phosphotyrosine modification. Residue S229 is modified to Phosphoserine. T230 is modified (phosphothreonine). S249 and S253 each carry phosphoserine. Residues 255 to 327 (DVTDIAPSRK…RNSSPEDIFD (73 aa)) are disordered. Positions 263 to 268 (RKRRHH) match the Nuclear localization signal motif. A Glycyl lysine isopeptide (Lys-Gly) (interchain with G-Cter in ubiquitin) cross-link involves residue K289. 4 positions are modified to phosphoserine: S294, S295, S308, and S313. Residues 308–327 (SAGNMSLETLRNSSPEDIFD) show a composition bias toward polar residues. Position 316 is a phosphothreonine (T316). A phosphoserine mark is found at S320 and S321.

The protein belongs to the XRCC4-XLF family. XRCC4 subfamily. As to quaternary structure, homodimer and homotetramer in solution. Interacts with NHEJ1/XLF; the interaction is direct and is mediated via a head-to-head interaction between N-terminal head regions. Interacts with LIG4; the LIG4-XRCC4 subcomplex has a 1:2 stoichiometry and XRCC4 is required for LIG4 stability. Component of the core long-range non-homologous end joining (NHEJ) complex (also named DNA-PK complex) composed of PRKDC, LIG4, XRCC4, XRCC6/Ku70, XRCC5/Ku86 and NHEJ1/XLF. Additional component of the NHEJ complex includes PAXX. Following autophosphorylation, PRKDC dissociates from DNA, leading to formation of the short-range NHEJ complex, composed of LIG4, XRCC4, XRCC6/Ku70, XRCC5/Ku86 and NHEJ1/XLF. Interacts with PRKDC; the interaction is direct. Interacts with XRCC6/Ku70; the interaction is direct. Interacts with APTX and APLF. Forms a heterotetramer with IFFO1; the interaction involves LIG4-free XRCC4 and leads to the relocalization of IFFO1 to the sites of DNA damage. Interacts with PNKP; mainly interacts with PNKP when phosphorylated at Thr-230, but is also able to interact at much lower level with PNKP when not unphosphorylated. Interacts with POLL (DNA polymerase lambda). Interacts with XKR4; interacts with the processed form of XKR4, which is cleaved by caspase. In terms of processing, phosphorylated by PRKDC at the C-terminus in response to DNA damage; Ser-253 constitutes the main phosphorylation sites. Phosphorylations by PRKDC at the C-terminus of XRCC4 and NHEJ1/XLF are highly redundant and regulate ability of the XRCC4-NHEJ1/XLF subcomplex to bridge DNA. Phosphorylation by PRKDC does not prevent interaction with NHEJ1/XLF but disrupts ability to bridge DNA and promotes detachment from DNA. Phosphorylation at Ser-320 and Ser-321 by PRKDC promotes recognition by the SCF(FBXW7) complex and subsequent ubiquitination via 'Lys-63'-linked ubiquitin. Phosphorylation at Thr-230 by CK2 promotes interaction with PNKP; regulating PNKP activity and localization to DNA damage sites. Phosphorylation by CK2 promotes interaction with APTX. Post-translationally, ubiquitinated at Lys-289 by the SCF(FBXW7) complex via 'Lys-63'-linked ubiquitination, thereby promoting double-strand break repair: the SCF(FBXW7) complex specifically recognizes XRCC4 when phosphorylated at Ser-320 and Ser-321 by PRKDC, and 'Lys-63'-linked ubiquitination facilitates DNA non-homologous end joining (NHEJ) by enhancing association with XRCC5/Ku80 and XRCC6/Ku70. Monoubiquitinated. Undergoes proteolytic processing by caspase-3 (CASP3). This generates the protein XRCC4, C-terminus (XRCC4/C), which translocates to the cytoplasm and activates phospholipid scramblase activity of XKR4, thereby promoting phosphatidylserine exposure on apoptotic cell surface.

Its subcellular location is the nucleus. It is found in the chromosome. The protein localises to the cytoplasm. DNA non-homologous end joining (NHEJ) core factor, required for double-strand break repair and V(D)J recombination. Acts as a scaffold protein that regulates recruitment of other proteins to DNA double-strand breaks (DSBs). Associates with NHEJ1/XLF to form alternating helical filaments that bridge DNA and act like a bandage, holding together the broken DNA until it is repaired. The XRCC4-NHEJ1/XLF subcomplex binds to the DNA fragments of a DSB in a highly diffusive manner and robustly bridges two independent DNA molecules, holding the broken DNA fragments in close proximity to one other. The mobility of the bridges ensures that the ends remain accessible for further processing by other repair factors. Plays a key role in the NHEJ ligation step of the broken DNA during DSB repair via direct interaction with DNA ligase IV (LIG4): the LIG4-XRCC4 subcomplex reseals the DNA breaks after the gap filling is completed. XRCC4 stabilizes LIG4, regulates its subcellular localization and enhances LIG4's joining activity. Binding of the LIG4-XRCC4 subcomplex to DNA ends is dependent on the assembly of the DNA-dependent protein kinase complex DNA-PK to these DNA ends. Promotes displacement of PNKP from processed strand break termini. Its function is as follows. Acts as an activator of the phospholipid scramblase activity of XKR4. This form, which is generated upon caspase-3 (CASP3) cleavage, translocates into the cytoplasm and interacts with XKR4, thereby promoting phosphatidylserine scramblase activity of XKR4 and leading to phosphatidylserine exposure on apoptotic cell surface. The chain is DNA repair protein XRCC4 from Cricetulus griseus (Chinese hamster).